Reading from the N-terminus, the 749-residue chain is 5-methyltetrahydropteroyltriglutamate--homocysteine methyltransferase (749 aa).

5-methyltetrahydropteroyltri-L-glutamate is bound by residues 15 to 18 (RELK) and Lys114. L-homocysteine is bound by residues 425–427 (IGS) and Glu478. L-methionine contacts are provided by residues 425–427 (IGS) and Glu478. Position 555 (Trp555) interacts with 5-methyltetrahydropteroyltri-L-glutamate. Asp593 lines the L-homocysteine pocket. Asp593 provides a ligand contact to L-methionine. Glu599 provides a ligand contact to 5-methyltetrahydropteroyltri-L-glutamate. Residues His636, Cys638, and Glu660 each contribute to the Zn(2+) site. His689 (proton donor) is an active-site residue. A Zn(2+)-binding site is contributed by Cys721.

It belongs to the vitamin-B12 independent methionine synthase family. It depends on Zn(2+) as a cofactor.

The catalysed reaction is 5-methyltetrahydropteroyltri-L-glutamate + L-homocysteine = tetrahydropteroyltri-L-glutamate + L-methionine. Its pathway is amino-acid biosynthesis; L-methionine biosynthesis via de novo pathway; L-methionine from L-homocysteine (MetE route): step 1/1. Catalyzes the transfer of a methyl group from 5-methyltetrahydrofolate to homocysteine resulting in methionine formation. The chain is 5-methyltetrahydropteroyltriglutamate--homocysteine methyltransferase from Streptococcus pneumoniae serotype 2 (strain D39 / NCTC 7466).